Reading from the N-terminus, the 486-residue chain is Maintenance of mitochondrial morphology protein 1 (486 aa).

Topologically, residues 1-23 (MSQHSQYDAPGVPVQPSLSFTQG) are lumenal. A helical membrane pass occupies residues 24-44 (FLLGQLSVVLLIGAFIKFFIF). Topologically, residues 45 to 486 (GEAPAPPSRG…PGSMPGGRAQ (442 aa)) are cytoplasmic. The segment at 52 to 103 (SRGLASRTASHHRSYSINQGDNNVSNNNTSGGSPRTLCEKPSTSNVLRPVPS) is disordered. Residues 67-84 (SINQGDNNVSNNNTSGGS) show a composition bias toward low complexity. Over residues 92–103 (PSTSNVLRPVPS) the composition is skewed to polar residues. The 250-residue stretch at 140–389 (QPESLDWFNV…EPRVQVVGLP (250 aa)) folds into the SMP-LTD domain. A compositionally biased stretch (low complexity) spans 413–426 (AAASASSRGGAPEA). A disordered region spans residues 413–486 (AAASASSRGG…PGSMPGGRAQ (74 aa)).

The protein belongs to the MMM1 family. In terms of assembly, homodimer. Component of the ER-mitochondria encounter structure (ERMES) or MDM complex, composed of mmm1, mdm10, mdm12 and mdm34. A mmm1 homodimer associates with one molecule of mdm12 on each side in a pairwise head-to-tail manner, and the SMP-LTD domains of mmm1 and mdm12 generate a continuous hydrophobic tunnel for phospholipid trafficking.

It localises to the endoplasmic reticulum membrane. In terms of biological role, component of the ERMES/MDM complex, which serves as a molecular tether to connect the endoplasmic reticulum (ER) and mitochondria. Components of this complex are involved in the control of mitochondrial shape and protein biogenesis, and function in nonvesicular lipid trafficking between the ER and mitochondria. The mdm12-mmm1 subcomplex functions in the major beta-barrel assembly pathway that is responsible for biogenesis of all outer membrane beta-barrel proteins, and acts in a late step after the SAM complex. The mdm10-mdm12-mmm1 subcomplex further acts in the TOM40-specific pathway after the action of the mdm12-mmm1 complex. Essential for establishing and maintaining the structure of mitochondria and maintenance of mtDNA nucleoids. The polypeptide is Maintenance of mitochondrial morphology protein 1 (Talaromyces marneffei (strain ATCC 18224 / CBS 334.59 / QM 7333) (Penicillium marneffei)).